Here is a 1158-residue protein sequence, read N- to C-terminus: MISLILQFMLKLHILGTILSHHLFFPLCFVFSAYVPEDELKAAKIDEEHLQDDGLSLDGQDAEYLCNEEDDGREQLSYQNSPLSNGTNPDAGYGSPLSDTSDHLADFKSTSSKEGQDKEEVEDMDTDAKLSLQDSLAQMKAVYANLISDASWSSITKDIMKSKQVSASSINSTSSSHKGNNSVANSHASTIASSGASSSSNASASTKTNVTQSSNSTKATTLTNANNGTINGANSGGVAYDWHQAALAKTLQHTPYHLMPEPSLFSTVQLYRQNNKLYGPVFTGASKFRCKDCSAAYDTLVGLTVHMNETGHYRDDNKDKEEDRGKKWSKPRKRSLMEMEGKEDAQKVLKCMYCGHSFESLQDLSVHMIKTKHYQKVPLKEPMPALASKLVPSTKKRVFQDLMSPCSPDSISSTPGIPLAETAPTKDPKISNPYVTANNRYGYQNGASYTWQFEARKAQILKCMECGSSHDTLQQLTAHMMVTGHFLKVTNSASKKGKQLVFDPVVEEKIQSIPLPPTTTRLPAPAIKSQPDSPIHPSIMDDRKELEEEKFEEPEEKKIKQEKEDPSERVEKSEKLSHYKYLREEDLEESPKGGLDILKSLENTVSSAISKAQTGTPTWGGYPSIHAAYQLQGSVKSSIPAIQSVQIQPTFNASSLKSLTSDSSTLIHSPSSPSPPPNHKSNVLAMEELVEKVTGKIPSKKDRDEKLTERNSKHLTAELPSPVLKERKDLPKPDDLTKPTKNGTVDKDLEHTPVREGEYKESHADNPIKNGTDALKTQVSNGCGNLGIITDHSPEQPLVNPLSALQSIMNTHLGKASKTVSPLLDPLAMLYKISNNMMEKPMYNPAQVKQVEPINRYYENDDDQPMDLTKSKSGIGPTNNCTSTIISNSSITNSTRPILSTLAEQVSSPLRENALMDISDMVKNLTGRLTPKSSTPSSISEKSDADGCAFEDGLEDLSPIQKRKGRQSNWNPQHLLILQAQFASSLRETPDGKYIITDLGPQERVHICKFTGLSMTTISHWLANVKYQLRRTGGTKFLKNIDSGHPLFLCSDCASQFRTPSTYINHLESHLGFSLKDLSKLSIDLIRDQQAVTKMITDKTFRALDLNEEDSNSIFQCKLCNRTFVSKHAVKLHLSKTHGKSPEDHLIFVTELEKLEKA.

Disordered stretches follow at residues 70–126, 170–228, and 310–341; these read DDGR…DMDT, INST…ANNG, and TGHY…EMEG. Positions 76–88 are enriched in polar residues; the sequence is LSYQNSPLSNGTN. Low complexity-rich tracts occupy residues 186–205 and 213–228; these read SHAS…ASAS and SSNS…ANNG. 2 C2H2-type zinc fingers span residues 288–312 and 349–373; these read FRCK…ETGH and LKCM…KTKH. Residues 310–326 show a composition bias toward basic and acidic residues; sequence TGHYRDDNKDKEEDRGK. A disordered region spans residues 405–425; the sequence is PCSPDSISSTPGIPLAETAPT. The C2H2-type 3 zinc finger occupies 461–485; sequence LKCMECGSSHDTLQQLTAHMMVTGH. 3 disordered regions span residues 516 to 573, 656 to 681, and 693 to 748; these read PPTT…VEKS, LKSL…NHKS, and VTGK…VDKD. Over residues 555-573 the composition is skewed to basic and acidic residues; the sequence is EEKKIKQEKEDPSERVEKS. Residues 656–671 are compositionally biased toward low complexity; that stretch reads LKSLTSDSSTLIHSPS. Basic and acidic residues-rich tracts occupy residues 693 to 716 and 724 to 748; these read VTGK…KHLT and LKER…VDKD. Positions 963 to 1033 form a DNA-binding region, homeobox; it reads RKGRQSNWNP…NVKYQLRRTG (71 aa). 2 consecutive C2H2-type zinc fingers follow at residues 1048 to 1070 and 1115 to 1138; these read FLCS…LESH and FQCK…SKTH.

It belongs to the teashirt C2H2-type zinc-finger protein family.

It localises to the nucleus. Functionally, probable transcriptional regulator involved in developmental processes. May act as a transcriptional repressor (Potential). This chain is Teashirt homolog 1 (tshz1), found in Danio rerio (Zebrafish).